The primary structure comprises 156 residues: Endoribonuclease YbeY (156 aa).

Zn(2+) is bound by residues His-122, His-126, and His-132.

Belongs to the endoribonuclease YbeY family. The cofactor is Zn(2+).

It localises to the cytoplasm. Single strand-specific metallo-endoribonuclease involved in late-stage 70S ribosome quality control and in maturation of the 3' terminus of the 16S rRNA. This chain is Endoribonuclease YbeY, found in Bacillus mycoides (strain KBAB4) (Bacillus weihenstephanensis).